Consider the following 447-residue polypeptide: Bifunctional protein GlmU (447 aa).

A pyrophosphorylase region spans residues 1–225; the sequence is MLTVAILAAG…NGELQGINNR (225 aa). UDP-N-acetyl-alpha-D-glucosamine is bound by residues 7 to 10, Lys-21, Gln-73, and 78 to 79; these read LAAG and GT. Residue Asp-103 coordinates Mg(2+). Residues Gly-140, Glu-154, Asn-169, and Asn-223 each coordinate UDP-N-acetyl-alpha-D-glucosamine. Asn-223 lines the Mg(2+) pocket. Residues 226-246 form a linker region; the sequence is VQLSKCEETIQNLIKEKHMLG. The segment at 247-447 is N-acetyltransferase; that stretch reads GVTFINPASC…QVNIENWKKN (201 aa). Residues Arg-328 and Lys-346 each coordinate UDP-N-acetyl-alpha-D-glucosamine. His-358 functions as the Proton acceptor in the catalytic mechanism. UDP-N-acetyl-alpha-D-glucosamine is bound by residues Tyr-361 and Asn-372. Acetyl-CoA-binding residues include Ala-375, Ala-418, and Arg-435.

This sequence in the N-terminal section; belongs to the N-acetylglucosamine-1-phosphate uridyltransferase family. The protein in the C-terminal section; belongs to the transferase hexapeptide repeat family. In terms of assembly, homotrimer. The cofactor is Mg(2+).

It localises to the cytoplasm. It carries out the reaction alpha-D-glucosamine 1-phosphate + acetyl-CoA = N-acetyl-alpha-D-glucosamine 1-phosphate + CoA + H(+). The catalysed reaction is N-acetyl-alpha-D-glucosamine 1-phosphate + UTP + H(+) = UDP-N-acetyl-alpha-D-glucosamine + diphosphate. The protein operates within nucleotide-sugar biosynthesis; UDP-N-acetyl-alpha-D-glucosamine biosynthesis; N-acetyl-alpha-D-glucosamine 1-phosphate from alpha-D-glucosamine 6-phosphate (route II): step 2/2. It functions in the pathway nucleotide-sugar biosynthesis; UDP-N-acetyl-alpha-D-glucosamine biosynthesis; UDP-N-acetyl-alpha-D-glucosamine from N-acetyl-alpha-D-glucosamine 1-phosphate: step 1/1. It participates in bacterial outer membrane biogenesis; LPS lipid A biosynthesis. Functionally, catalyzes the last two sequential reactions in the de novo biosynthetic pathway for UDP-N-acetylglucosamine (UDP-GlcNAc). The C-terminal domain catalyzes the transfer of acetyl group from acetyl coenzyme A to glucosamine-1-phosphate (GlcN-1-P) to produce N-acetylglucosamine-1-phosphate (GlcNAc-1-P), which is converted into UDP-GlcNAc by the transfer of uridine 5-monophosphate (from uridine 5-triphosphate), a reaction catalyzed by the N-terminal domain. The protein is Bifunctional protein GlmU of Prochlorococcus marinus (strain MIT 9515).